Reading from the N-terminus, the 441-residue chain is Glutamate-1-semialdehyde 2,1-aminomutase (441 aa).

Position 270 is an N6-(pyridoxal phosphate)lysine (Lys270).

It belongs to the class-III pyridoxal-phosphate-dependent aminotransferase family. HemL subfamily. In terms of assembly, homodimer. Pyridoxal 5'-phosphate serves as cofactor.

It localises to the cytoplasm. It catalyses the reaction (S)-4-amino-5-oxopentanoate = 5-aminolevulinate. The protein operates within porphyrin-containing compound metabolism; protoporphyrin-IX biosynthesis; 5-aminolevulinate from L-glutamyl-tRNA(Glu): step 2/2. This chain is Glutamate-1-semialdehyde 2,1-aminomutase (hemL), found in Propionibacterium freudenreichii subsp. freudenreichii.